The chain runs to 347 residues: Olfactory receptor 6J1 (347 aa).

At 1–24 (MGNWTAAVTEFVLLGFSLSREVEL) the chain is on the extracellular side. The N-linked (GlcNAc...) asparagine glycan is linked to N3. The chain crosses the membrane as a helical span at residues 25–45 (LLLVLLLPTFLLTLLGNLLII). Over 46-53 (STVLSCSR) the chain is Cytoplasmic. A helical membrane pass occupies residues 54–74 (LHTPMYFFLCNLSILDILFTS). Over 75–98 (VISPKVLANLGSRDKTISFAGCIT) the chain is Extracellular. C96 and C188 are disulfide-bonded. Residues 99 to 119 (QCYFYFFLGTVEFLLLTVMSY) form a helical membrane-spanning segment. Over 120-138 (DRYATICCPLRYTTIMRPS) the chain is Cytoplasmic. The chain crosses the membrane as a helical span at residues 139-159 (VCIGTVVFSWVGGFLSVLFPT). Over 160–196 (ILISQLPFCGSNIINHFFCDSGPLLALACADTTAIEL) the chain is Extracellular. Residues 197–216 (MDFMLSSMVILCCIVLVAYS) traverse the membrane as a helical segment. Topologically, residues 217-236 (YTYIILTIVRIPSASGRKKA) are cytoplasmic. A helical transmembrane segment spans residues 237-257 (FNTCASHLTIVIISSGITVFI). At 258-270 (YVTPSQKEYLEIN) the chain is on the extracellular side. The chain crosses the membrane as a helical span at residues 271–291 (KIPLVLSSVVTPFLNPFIYTL). The Cytoplasmic segment spans residues 292–347 (RNDTVQGVLRDVWVRVRGVFEKRMRAVLRSRLSSNKDHQGRACSSPPCVYSVKLQC).

The protein belongs to the G-protein coupled receptor 1 family.

It localises to the cell membrane. Odorant receptor. The sequence is that of Olfactory receptor 6J1 (OR6J1) from Homo sapiens (Human).